The primary structure comprises 487 residues: uncharacterized protein (487 aa).

2 consecutive ABC transporter domains span residues 5 to 249 (VKFA…IPVK) and 265 to 487 (ISME…VIHA). An ATP-binding site is contributed by 297–304 (GSNGSGKT).

Belongs to the ABC transporter superfamily.

It is found in the mitochondrion. This is an uncharacterized protein from Schizosaccharomyces pombe (strain 972 / ATCC 24843) (Fission yeast).